The sequence spans 202 residues: ATP-dependent Clp protease proteolytic subunit (202 aa).

Serine 106 acts as the Nucleophile in catalysis. Histidine 131 is an active-site residue.

It belongs to the peptidase S14 family. Fourteen ClpP subunits assemble into 2 heptameric rings which stack back to back to give a disk-like structure with a central cavity, resembling the structure of eukaryotic proteasomes.

The protein resides in the cytoplasm. The enzyme catalyses Hydrolysis of proteins to small peptides in the presence of ATP and magnesium. alpha-casein is the usual test substrate. In the absence of ATP, only oligopeptides shorter than five residues are hydrolyzed (such as succinyl-Leu-Tyr-|-NHMec, and Leu-Tyr-Leu-|-Tyr-Trp, in which cleavage of the -Tyr-|-Leu- and -Tyr-|-Trp bonds also occurs).. Functionally, cleaves peptides in various proteins in a process that requires ATP hydrolysis. Has a chymotrypsin-like activity. Plays a major role in the degradation of misfolded proteins. The sequence is that of ATP-dependent Clp protease proteolytic subunit from Albidiferax ferrireducens (strain ATCC BAA-621 / DSM 15236 / T118) (Rhodoferax ferrireducens).